The chain runs to 1004 residues: Unconventional myosin-Id (1004 aa).

One can recognise a Myosin motor domain in the interval 9 to 695 (FGKADFVLLD…TIFSLEEQRA (687 aa)). 102-109 (GESGAGKT) is a binding site for ATP. Positions 572–594 (MISLVEKLASKEPYYVRCIKPND) are actin-binding. IQ domains are found at residues 699-719 (KRIVLFLQKVWRGTLARMRYR) and 721-741 (MRAALIIIRAYRRYKVKSYIR). A TH1 domain is found at 812–1003 (GQRADLGLQR…RSGYILSVPG (192 aa)).

It belongs to the TRAFAC class myosin-kinesin ATPase superfamily. Myosin family. Interacts (via the two IQ motifs) with calmodulin. Interacts with F-actin.

The protein resides in the cytoplasm. Its subcellular location is the perikaryon. It is found in the cell projection. It localises to the dendrite. The protein localises to the early endosome. The protein resides in the cell cortex. Unconventional myosin that functions as actin-based motor protein with ATPase activity. Plays a role in the formation of Kupffer's vesicle, an organ that functions as a left-right organizer during embryogenesis. Plays a role in vesicular trafficking events that are required for normal lumen expansion of Kupffer's vesicle. Required for normal orientation of cilia in Kupffer's vesicle, and thus for normal, unidirectional circular flow and normal angular flow velocity, which then mediates asymmetric gene expression and left-right asymmetric development. Plays a role in endosomal protein trafficking, and especially in the transfer of cargo proteins from early to recycling endosomes. Required for normal planar cell polarity in ciliated cells, for normal rotational polarity of cilia, and for coordinated, unidirectional ciliary movement. This is Unconventional myosin-Id (myo1d) from Danio rerio (Zebrafish).